The primary structure comprises 197 residues: Protein SYM1 (197 aa).

4 consecutive transmembrane segments (helical) span residues A20–T40, A55–N75, V97–M117, and L137–L157.

It belongs to the peroxisomal membrane protein PXMP2/4 family.

It localises to the mitochondrion inner membrane. May be involved in cellular response to stress. Required to maintain mitochondrial DNA (mtDNA) integrity and stability. Required for ethanol metabolism and tolerance during heat shock. This is Protein SYM1 (SYM1) from Saccharomyces cerevisiae (strain ATCC 204508 / S288c) (Baker's yeast).